A 462-amino-acid chain; its full sequence is Ribosomal oxygenase 2 (462 aa).

The tract at residues 1–24 (MPKKARPAGDGKEQGPAPKQVKVE) is disordered. The 133-residue stretch at 139 to 271 (QPQRFKDELW…SSWGDFLLDT (133 aa)) folds into the JmjC domain. Fe cation-binding residues include H179, D181, and H240. S308 is subject to Phosphoserine.

The protein belongs to the ROX family. MINA53 subfamily. It depends on Fe(2+) as a cofactor.

The protein resides in the nucleus. Its subcellular location is the nucleolus. It catalyses the reaction L-histidyl-[ribosomal protein uL15] + 2-oxoglutarate + O2 = (3S)-3-hydroxy-L-histidyl-[ribosomal protein uL15] + succinate + CO2. It carries out the reaction L-histidyl-[protein] + 2-oxoglutarate + O2 = (3S)-3-hydroxy-L-histidyl-[protein] + succinate + CO2. Its function is as follows. Oxygenase that can act as both a histone lysine demethylase and a ribosomal histidine hydroxylase. Is involved in the demethylation of trimethylated 'Lys-9' on histone H3 (H3K9me3), leading to an increase in ribosomal RNA expression. Also catalyzes the hydroxylation of 60S ribosomal protein L27a on 'His-39'. May play an important role in cell growth and survival. May be involved in ribosome biogenesis, most likely during the assembly process of pre-ribosomal particles. The protein is Ribosomal oxygenase 2 (RIOX2) of Bos taurus (Bovine).